A 674-amino-acid chain; its full sequence is Enzymatic polyprotein (674 aa).

The interval 40–130 is protease; sequence IELHCFVDTG…CQLYEPFIQF (91 aa). Asp47 is a catalytic residue. The region spanning 267–447 is the Reverse transcriptase domain; sequence LKVIKPSKSP…KKINFLGLEI (181 aa).

It belongs to the caulimoviridae enzymatic polyprotein family.

The enzyme catalyses DNA(n) + a 2'-deoxyribonucleoside 5'-triphosphate = DNA(n+1) + diphosphate. Its function is as follows. Encodes for at least two polypeptides: protease (PR) and reverse transcriptase (RT). The protease processes the polyprotein in cis. Reverse transcriptase is multifunctional enzyme that converts the viral RNA genome into dsDNA in viral cytoplasmic capsids. This enzyme displays a DNA polymerase activity that can copy either DNA or RNA templates, and a ribonuclease H (RNase H) activity that cleaves the RNA strand of RNA-DNA heteroduplexes in a partially processive 3'- to 5'-endonucleasic mode. Neo-synthesized pregenomic RNA (pgRNA) are encapsidated, and reverse-transcribed inside the nucleocapsid. Partial (+)DNA is synthesized from the (-)DNA template and generates the relaxed circular DNA (RC-DNA) genome. After budding and infection, the RC-DNA migrates in the nucleus, and is converted into a plasmid-like covalently closed circular DNA (cccDNA). The polypeptide is Enzymatic polyprotein (Arabidopsis thaliana (Mouse-ear cress)).